The following is a 205-amino-acid chain: Holliday junction branch migration complex subunit RuvA (205 aa).

The tract at residues 1–67 (MITSIFGKVT…QIIEEAFAFN (67 aa)) is domain I. Positions 68–146 (TLEEKEWFCR…NNKNIKGVQV (79 aa)) are domain II. The segment at 147 to 150 (ADGY) is flexible linker. Positions 150–205 (YDELFETLKSLGYKQQEIQDALKMIEVKPDFDISQLVAEVIKLMSFKNNEITNKTA) are domain III.

This sequence belongs to the RuvA family. Homotetramer. Forms an RuvA(8)-RuvB(12)-Holliday junction (HJ) complex. HJ DNA is sandwiched between 2 RuvA tetramers; dsDNA enters through RuvA and exits via RuvB. An RuvB hexamer assembles on each DNA strand where it exits the tetramer. Each RuvB hexamer is contacted by two RuvA subunits (via domain III) on 2 adjacent RuvB subunits; this complex drives branch migration. In the full resolvosome a probable DNA-RuvA(4)-RuvB(12)-RuvC(2) complex forms which resolves the HJ.

It is found in the cytoplasm. In terms of biological role, the RuvA-RuvB-RuvC complex processes Holliday junction (HJ) DNA during genetic recombination and DNA repair, while the RuvA-RuvB complex plays an important role in the rescue of blocked DNA replication forks via replication fork reversal (RFR). RuvA specifically binds to HJ cruciform DNA, conferring on it an open structure. The RuvB hexamer acts as an ATP-dependent pump, pulling dsDNA into and through the RuvAB complex. HJ branch migration allows RuvC to scan DNA until it finds its consensus sequence, where it cleaves and resolves the cruciform DNA. The polypeptide is Holliday junction branch migration complex subunit RuvA (Mycoplasma genitalium (strain ATCC 33530 / DSM 19775 / NCTC 10195 / G37) (Mycoplasmoides genitalium)).